Consider the following 407-residue polypeptide: Protoasukamycin 4-monooxygenase (407 aa).

In terms of assembly, does not interact with AsuE2, suggesting a possible transient interaction between the two enzymes instead of formation of a stable complex. The cofactor is FMN. It depends on FAD as a cofactor. Riboflavin is required as a cofactor.

The catalysed reaction is protoasukamycin + NADH + O2 + H(+) = 4-hydroxyprotoasukamycin + NAD(+) + H2O. Its pathway is antibiotic biosynthesis. When flavin concentration is low, activity is enhanced by the presence of the NADH-dependent flavin reductase AsuE2. In the presence of abundant flavin, activity of AsuE1 is not affected by AsuE2. Involved in the biosynthesis of the antibiotic asukamycin. Catalyzes the conversion of protoasukamycin to 4-hydroxyprotoasukamycin. Can also convert some protoasukamycin derivatives into their corresponding 4-hydroxyprotoasukamycin derivatives. Can also use NADPH, but catalytic efficiency is 50-fold higher with NADH. The protein is Protoasukamycin 4-monooxygenase of Streptomyces nodosus subsp. asukaensis.